Here is a 645-residue protein sequence, read N- to C-terminus: Chaperone protein DnaK (645 aa).

The residue at position 201 (Thr201) is a Phosphothreonine; by autocatalysis. Over residues 606-629 (NTNNATAGDNNTTDTGSSSNSDGS) the composition is skewed to low complexity. A disordered region spans residues 606 to 645 (NTNNATAGDNNTTDTGSSSNSDGSKVVDSDYQEIDKKDGK). The span at 630-645 (KVVDSDYQEIDKKDGK) shows a compositional bias: basic and acidic residues.

The protein belongs to the heat shock protein 70 family.

Its function is as follows. Acts as a chaperone. The protein is Chaperone protein DnaK of Ehrlichia ruminantium (strain Gardel).